Reading from the N-terminus, the 211-residue chain is Pyridoxine/pyridoxamine 5'-phosphate oxidase (211 aa).

Substrate-binding positions include 7-10 and Lys65; that span reads RREY. FMN contacts are provided by residues 60 to 65, 75 to 76, Arg81, Lys82, and Gln104; these read RTVLLK and YT. Residues Tyr122, Arg126, and Ser130 each contribute to the substrate site. FMN contacts are provided by residues 139-140 and Trp184; that span reads QS. Position 190 to 192 (190 to 192) interacts with substrate; that stretch reads RLH. Arg194 is an FMN binding site.

It belongs to the pyridoxamine 5'-phosphate oxidase family. Homodimer. The cofactor is FMN.

The enzyme catalyses pyridoxamine 5'-phosphate + O2 + H2O = pyridoxal 5'-phosphate + H2O2 + NH4(+). It catalyses the reaction pyridoxine 5'-phosphate + O2 = pyridoxal 5'-phosphate + H2O2. Its pathway is cofactor metabolism; pyridoxal 5'-phosphate salvage; pyridoxal 5'-phosphate from pyridoxamine 5'-phosphate: step 1/1. It functions in the pathway cofactor metabolism; pyridoxal 5'-phosphate salvage; pyridoxal 5'-phosphate from pyridoxine 5'-phosphate: step 1/1. In terms of biological role, catalyzes the oxidation of either pyridoxine 5'-phosphate (PNP) or pyridoxamine 5'-phosphate (PMP) into pyridoxal 5'-phosphate (PLP). This Aeromonas hydrophila subsp. hydrophila (strain ATCC 7966 / DSM 30187 / BCRC 13018 / CCUG 14551 / JCM 1027 / KCTC 2358 / NCIMB 9240 / NCTC 8049) protein is Pyridoxine/pyridoxamine 5'-phosphate oxidase.